Consider the following 606-residue polypeptide: UvrABC system protein C (606 aa).

The GIY-YIG domain maps to glutamine 19–isoleucine 97. The 36-residue stretch at glutamate 207–isoleucine 242 folds into the UVR domain.

Belongs to the UvrC family. In terms of assembly, interacts with UvrB in an incision complex.

The protein resides in the cytoplasm. The UvrABC repair system catalyzes the recognition and processing of DNA lesions. UvrC both incises the 5' and 3' sides of the lesion. The N-terminal half is responsible for the 3' incision and the C-terminal half is responsible for the 5' incision. This is UvrABC system protein C from Wolbachia sp. subsp. Brugia malayi (strain TRS).